A 65-amino-acid polypeptide reads, in one-letter code: Metallothionein-like protein type 3 (65 aa).

Belongs to the metallothionein superfamily. Type 15 family.

Functionally, metallothioneins have a high content of cysteine residues that bind various heavy metals. The polypeptide is Metallothionein-like protein type 3 (Carica papaya (Papaya)).